The chain runs to 128 residues: Large ribosomal subunit protein uL22 (128 aa).

The protein belongs to the universal ribosomal protein uL22 family. Part of the 50S ribosomal subunit.

Its function is as follows. This protein binds specifically to 23S rRNA; its binding is stimulated by other ribosomal proteins, e.g. L4, L17, and L20. It is important during the early stages of 50S assembly. It makes multiple contacts with different domains of the 23S rRNA in the assembled 50S subunit and ribosome. In terms of biological role, the globular domain of the protein is located near the polypeptide exit tunnel on the outside of the subunit, while an extended beta-hairpin is found that lines the wall of the exit tunnel in the center of the 70S ribosome. The sequence is that of Large ribosomal subunit protein uL22 from Prochlorococcus marinus subsp. pastoris (strain CCMP1986 / NIES-2087 / MED4).